A 223-amino-acid polypeptide reads, in one-letter code: B-cell antigen receptor complex-associated protein alpha chain (223 aa).

An N-terminal signal peptide occupies residues 1 to 31 (MPEGPQALQSPPATIFLLLISAAGLGPGCQA). An Ig-like C2-type domain is found at 32–120 (LWVEWGPPSV…KIQRSCGTYL (89 aa)). The Extracellular segment spans residues 32–140 (LWVEWGPPSV…LDMGEGTKNN (109 aa)). The cysteines at positions 53 and 104 are disulfide-linked. N-linked (GlcNAc...) asparagine glycans are attached at residues Asn-56, Asn-61, Asn-71, and Asn-95. The chain crosses the membrane as a helical span at residues 141 to 161 (IITAEGIILLICAVVPGTLLL). The Cytoplasmic portion of the chain corresponds to 162-223 (FRKRWQNMKF…HIGDAQLEKP (62 aa)). One can recognise an ITAM domain in the interval 174–202 (DIQDDYEDENLYEGLNLDDCSMYEDISRG). Tyr-185 is modified (phosphotyrosine; by SRC-type Tyr-kinases). A Phosphotyrosine modification is found at Tyr-196. At Arg-201 the chain carries Asymmetric dimethylarginine; by PRMT1. A Phosphotyrosine; by Tyr-kinases modification is found at Tyr-207.

As to quaternary structure, heterodimer of alpha and beta chains; disulfide-linked. Part of the B-cell antigen receptor complex where the alpha/beta chain heterodimer is non-covalently associated with an antigen-specific membrane-bound surface immunoglobulin of two heavy chains and two light chains. Interacts through its phosphorylated ITAM domain with the SH2 domains of SYK which stimulates SYK autophosphorylation and activation. Also interacts, when phosphorylated on Tyr-207, with the SH2 domain of BLNK/SLP65, bringing BLNK into proximity with SYK and allowing SYK to phosphorylate BLNK which is necessary for trafficking of the BCR to late endosomes. Interacts with Src-family tyrosine kinases including FYN and LYN, increasing their activity. Post-translationally, phosphorylated on tyrosine, serine and threonine residues upon B-cell activation. Phosphorylation of tyrosine residues by Src-family kinases, including LYN, is an early and essential feature of the BCR signaling cascade. The phosphorylated tyrosines serve as docking sites for SH2-domain containing kinases, leading to their activation which in turn leads to phosphorylation of downstream targets. Phosphorylation of serine and threonine residues may prevent subsequent tyrosine phosphorylation. Arginine methylation in the ITAM domain may interfere with the binding of SYK. It promotes signals leading to B-cell differentiation. In terms of tissue distribution, B-cells.

It is found in the cell membrane. Functionally, required in cooperation with CD79B for initiation of the signal transduction cascade activated by binding of antigen to the B-cell antigen receptor complex (BCR) which leads to internalization of the complex, trafficking to late endosomes and antigen presentation. Also required for BCR surface expression and for efficient differentiation of pro- and pre-B-cells. Stimulates SYK autophosphorylation and activation. Binds to BLNK, bringing BLNK into proximity with SYK and allowing SYK to phosphorylate BLNK. Also interacts with and increases activity of some Src-family tyrosine kinases. Represses BCR signaling during development of immature B-cells. In Bos taurus (Bovine), this protein is B-cell antigen receptor complex-associated protein alpha chain (CD79A).